The following is a 241-amino-acid chain: Orotidine 5'-phosphate decarboxylase (241 aa).

Residues D18, K39, 66 to 75, T130, R192, Q201, G221, and R222 each bind substrate; that span reads DLKFHDIPAT. Residue K68 is the Proton donor of the active site.

Belongs to the OMP decarboxylase family. Type 1 subfamily. Homodimer.

The catalysed reaction is orotidine 5'-phosphate + H(+) = UMP + CO2. It functions in the pathway pyrimidine metabolism; UMP biosynthesis via de novo pathway; UMP from orotate: step 2/2. Catalyzes the decarboxylation of orotidine 5'-monophosphate (OMP) to uridine 5'-monophosphate (UMP). The chain is Orotidine 5'-phosphate decarboxylase from Synechococcus sp. (strain CC9605).